A 508-amino-acid chain; its full sequence is Aldehyde dehydrogenase (508 aa).

Catalysis depends on residues glutamate 264 and cysteine 303.

Belongs to the aldehyde dehydrogenase family.

The enzyme catalyses acetaldehyde + NAD(+) + H2O = acetate + NADH + 2 H(+). It functions in the pathway organosulfur degradation. Catalyzes the NAD(+)-dependent oxidation of acetaldehyde to acetate. This Paracoccus denitrificans (strain Pd 1222) protein is Aldehyde dehydrogenase.